Reading from the N-terminus, the 192-residue chain is NADH-quinone oxidoreductase subunit B (192 aa).

The [4Fe-4S] cluster site is built by Cys-71, Cys-72, Cys-136, and Cys-166.

This sequence belongs to the complex I 20 kDa subunit family. In terms of assembly, NDH-1 is composed of 14 different subunits. Subunits NuoB, C, D, E, F, and G constitute the peripheral sector of the complex. [4Fe-4S] cluster serves as cofactor.

It is found in the cell inner membrane. The catalysed reaction is a quinone + NADH + 5 H(+)(in) = a quinol + NAD(+) + 4 H(+)(out). In terms of biological role, NDH-1 shuttles electrons from NADH, via FMN and iron-sulfur (Fe-S) centers, to quinones in the respiratory chain. The immediate electron acceptor for the enzyme in this species is believed to be ubiquinone. Couples the redox reaction to proton translocation (for every two electrons transferred, four hydrogen ions are translocated across the cytoplasmic membrane), and thus conserves the redox energy in a proton gradient. The chain is NADH-quinone oxidoreductase subunit B from Sinorhizobium medicae (strain WSM419) (Ensifer medicae).